The chain runs to 178 residues: Large ribosomal subunit protein uL6 (178 aa).

Belongs to the universal ribosomal protein uL6 family. In terms of assembly, part of the 50S ribosomal subunit.

In terms of biological role, this protein binds to the 23S rRNA, and is important in its secondary structure. It is located near the subunit interface in the base of the L7/L12 stalk, and near the tRNA binding site of the peptidyltransferase center. The polypeptide is Large ribosomal subunit protein uL6 (Campylobacter concisus (strain 13826)).